A 357-amino-acid polypeptide reads, in one-letter code: Peptide chain release factor 1 (357 aa).

Q234 is subject to N5-methylglutamine.

Belongs to the prokaryotic/mitochondrial release factor family. Methylated by PrmC. Methylation increases the termination efficiency of RF1.

It is found in the cytoplasm. In terms of biological role, peptide chain release factor 1 directs the termination of translation in response to the peptide chain termination codons UAG and UAA. The polypeptide is Peptide chain release factor 1 (Chlorobaculum tepidum (strain ATCC 49652 / DSM 12025 / NBRC 103806 / TLS) (Chlorobium tepidum)).